The following is a 402-amino-acid chain: Tryptophan synthase beta chain 2 (402 aa).

Residue Lys97 is modified to N6-(pyridoxal phosphate)lysine.

It belongs to the TrpB family. In terms of assembly, tetramer of two alpha and two beta chains. It depends on pyridoxal 5'-phosphate as a cofactor.

It catalyses the reaction (1S,2R)-1-C-(indol-3-yl)glycerol 3-phosphate + L-serine = D-glyceraldehyde 3-phosphate + L-tryptophan + H2O. The protein operates within amino-acid biosynthesis; L-tryptophan biosynthesis; L-tryptophan from chorismate: step 5/5. In terms of biological role, the beta subunit is responsible for the synthesis of L-tryptophan from indole and L-serine. In Wolinella succinogenes (strain ATCC 29543 / DSM 1740 / CCUG 13145 / JCM 31913 / LMG 7466 / NCTC 11488 / FDC 602W) (Vibrio succinogenes), this protein is Tryptophan synthase beta chain 2 (trpB2).